The primary structure comprises 371 residues: S-adenosylmethionine:tRNA ribosyltransferase-isomerase (371 aa).

The protein belongs to the QueA family. As to quaternary structure, monomer.

The protein localises to the cytoplasm. It catalyses the reaction 7-aminomethyl-7-carbaguanosine(34) in tRNA + S-adenosyl-L-methionine = epoxyqueuosine(34) in tRNA + adenine + L-methionine + 2 H(+). Its pathway is tRNA modification; tRNA-queuosine biosynthesis. Functionally, transfers and isomerizes the ribose moiety from AdoMet to the 7-aminomethyl group of 7-deazaguanine (preQ1-tRNA) to give epoxyqueuosine (oQ-tRNA). The protein is S-adenosylmethionine:tRNA ribosyltransferase-isomerase of Prochlorococcus marinus (strain MIT 9303).